The sequence spans 293 residues: Probable endoribonuclease YicC (293 aa).

Belongs to the YicC/YloC family. Requires a divalent metal cation as cofactor.

Negatively modulates sporulation, probably in response to nutrient conditions. Effects expression of sporulation regulator spo0A in an indirect manner, possibly via repression of the sinRR' operon. Functionally, probably a ssRNA endonuclease. In terms of biological role, might contribute to small RNA (sRNA) regulation. This is Probable endoribonuclease YicC from Clostridioides difficile (strain 630) (Peptoclostridium difficile).